We begin with the raw amino-acid sequence, 110 residues long: Small ribosomal subunit protein bS16 (110 aa).

Positions 82 to 103 are enriched in basic and acidic residues; the sequence is VKKREARNNPEKAVPRKERKAQ. The segment at 82 to 110 is disordered; it reads VKKREARNNPEKAVPRKERKAQAEAAAKG.

The protein belongs to the bacterial ribosomal protein bS16 family.

The sequence is that of Small ribosomal subunit protein bS16 from Bradyrhizobium sp. (strain ORS 278).